A 348-amino-acid chain; its full sequence is Protein RecA (348 aa).

66–73 (GPESSGKT) contacts ATP.

The protein belongs to the RecA family.

Its subcellular location is the cytoplasm. Its function is as follows. Can catalyze the hydrolysis of ATP in the presence of single-stranded DNA, the ATP-dependent uptake of single-stranded DNA by duplex DNA, and the ATP-dependent hybridization of homologous single-stranded DNAs. It interacts with LexA causing its activation and leading to its autocatalytic cleavage. The sequence is that of Protein RecA from Neisseria gonorrhoeae (strain NCCP11945).